The chain runs to 272 residues: uncharacterized protein (272 aa).

A disordered region spans residues 193 to 250 (AFLLPNNSKGVEKSEENEDGVTDNDSSNVNSSTNESPNPTDINVCSNDDATDNTENNL). Residues 215 to 233 (DNDSSNVNSSTNESPNPTD) are compositionally biased toward low complexity. Positions 235–248 (NVCSNDDATDNTEN) are enriched in polar residues.

This sequence belongs to the pal1 family.

The protein localises to the cytoplasm. It localises to the nucleus. This is an uncharacterized protein from Schizosaccharomyces pombe (strain 972 / ATCC 24843) (Fission yeast).